Reading from the N-terminus, the 558-residue chain is MLSIKKDLLSALAIALEQLSPGAGDKAAFESPKVAAHGDFACTAAMQLAKPLKQNPRQTAESLRARLLLAPAFERWVEAIEIAGPGFINIRLKPAAKQETVREVLQAGAQYGTQPTDHERKMIVEFVSANPTGPLHVGHGRQAALGDAICNLHATQGLDVWREFYYNDAGVQIHTLATSTQARAKGLKPGDANWPEPAYNGDYIDDIARDFLAKKTVKSDDREFTASGDVEDMEAIRQFAVAYLRHEQDLDLKAFSVKFDNYYLESSLYSSGRVESTVQRLKDAGKTYEQDGALWLRSTDYGDDKDRVMKKSDGTFTYFVPDVAYHLAKWERGFTKAVNIQGMDHHGTIARVRAGLQAANAGIPAGYPDYVLHTMVRVVRHGEEVKISKRAGSYVTLRDLIEWTSADAVRFFLLSRKPDTEYIFDIDLALAKNNENPVYYVQYAHARICSILTAWGGDESQFGHVDLSPLASPQAQALMLLLAKYTDMLSHAAAGFAPHDVAFYLRELAACYHSYYDAERILVDDEAVKLARLALVAATAQVLHNGLAVLGVSAPRKM.

Residues 129 to 139 (ANPTGPLHVGH) carry the 'HIGH' region motif.

It belongs to the class-I aminoacyl-tRNA synthetase family. Monomer.

It localises to the cytoplasm. The enzyme catalyses tRNA(Arg) + L-arginine + ATP = L-arginyl-tRNA(Arg) + AMP + diphosphate. This is Arginine--tRNA ligase from Polaromonas naphthalenivorans (strain CJ2).